The following is a 288-amino-acid chain: Galactose/N-acetyl-D-galactosamine lectin light subunit 1 (288 aa).

The signal sequence occupies residues 1-15; it reads MIILVLLISYSFGKT. Asparagine 205 and asparagine 261 each carry an N-linked (GlcNAc...) asparagine glycan.

As to quaternary structure, heterodimer composed of a 170 kDa heavy subunit (hgl) and a 31/35 kDa light subunit (lgl); disulfide-linked.

Its subcellular location is the cell membrane. Functionally, light subunit of a heterodimeric lectin; the heavy subunit binds galactose and N-acetyl-D-galactosamine of host glycoproteins and thus mediates adhesion to host cells. The protein is Galactose/N-acetyl-D-galactosamine lectin light subunit 1 of Entamoeba histolytica (strain ATCC 30459 / HM-1:IMSS / ABRM).